Here is a 397-residue protein sequence, read N- to C-terminus: Enoyl-[acyl-carrier-protein] reductase [NADH] (397 aa).

NAD(+) is bound by residues 48–53 (GASTGY), 74–75 (LE), 111–112 (DA), and 139–140 (LA). Residue Tyr225 coordinates substrate. Catalysis depends on Tyr235, which acts as the Proton donor. NAD(+) contacts are provided by residues Lys244 and 273 to 275 (VVT).

It belongs to the TER reductase family. In terms of assembly, monomer.

It carries out the reaction a 2,3-saturated acyl-[ACP] + NAD(+) = a (2E)-enoyl-[ACP] + NADH + H(+). It functions in the pathway lipid metabolism; fatty acid biosynthesis. Its function is as follows. Involved in the final reduction of the elongation cycle of fatty acid synthesis (FAS II). Catalyzes the reduction of a carbon-carbon double bond in an enoyl moiety that is covalently linked to an acyl carrier protein (ACP). The sequence is that of Enoyl-[acyl-carrier-protein] reductase [NADH] from Tolumonas auensis (strain DSM 9187 / NBRC 110442 / TA 4).